Reading from the N-terminus, the 406-residue chain is Putative sodium-coupled neutral amino acid transporter 11 (406 aa).

Over 1 to 7 (MKQAGFP) the chain is Cytoplasmic. The helical transmembrane segment at 8–28 (LGILLLFWVSYVTDFSLVLLI) threads the bilayer. Asn-44 is a glycosylation site (N-linked (GlcNAc...) asparagine). 6 helical membrane passes run 48–68 (GFPG…IAMI), 93–113 (VFIG…LPLS), 121–141 (LGKV…IVMA), 156–176 (AWVF…FAFI), 202–222 (MSIV…YLTF), and 241–263 (VTFG…CFVT). Asn-275 is a glycosylation site (N-linked (GlcNAc...) asparagine). The next 3 membrane-spanning stretches (helical) occupy residues 279–299 (VFHI…SLLI), 301–321 (CLGI…IFII), and 340–360 (IMSC…FVMA).

It belongs to the amino acid/polyamine transporter 2 family.

The protein resides in the membrane. Its function is as follows. Putative sodium-dependent amino acid/proton antiporter. The sequence is that of Putative sodium-coupled neutral amino acid transporter 11 (SLC38A11) from Homo sapiens (Human).